We begin with the raw amino-acid sequence, 934 residues long: ATP-dependent RNA helicase dbp10 (934 aa).

Positions 1 to 57 (MPHRAASPAMSENEFDITGALFQNDSDSDNEQPSAKSKRQPPKKVPSQALDFLGDVN) are disordered. Polar residues predominate over residues 21–35 (LFQNDSDSDNEQPSA). The Q motif motif lies at 90-118 (GGFQAMGLSANLLKAIARKGFSVPTPIQR). One can recognise a Helicase ATP-binding domain in the interval 121–293 (IPVIMDDQDV…RAGLQEPTLV (173 aa)). 134 to 141 (ARTGSGKT) is a binding site for ATP. The DEAD box signature appears at 241–244 (DEAD). The tract at residues 334 to 358 (GPTEVSQQRKEEDASAKNWKNKKRK) is disordered. The Helicase C-terminal domain occupies 361–515 (EMEKAVNMRE…QVNFAEDVVT (155 aa)). Positions 639–654 (LESKKKRAQANEKSEF) are enriched in basic and acidic residues. Disordered stretches follow at residues 639-688 (LESK…PTGV) and 854-934 (AISG…SRKK). Acidic residues predominate over residues 669–684 (GENENEGAFSDEDDDV). 2 stretches are compositionally biased toward basic and acidic residues: residues 865–893 (EQAPKRADPLRGDYEKMKKKAELAKERAM) and 903–915 (GKSELKNTDDIRI). A compositionally biased stretch (basic residues) spans 916-934 (ARKLKQKRREKNARPSRKK).

This sequence belongs to the DEAD box helicase family. DDX54/DBP10 subfamily.

Its subcellular location is the nucleus. It is found in the nucleolus. The catalysed reaction is ATP + H2O = ADP + phosphate + H(+). Functionally, ATP-binding RNA helicase involved in the biogenesis of 60S ribosomal subunits and is required for the normal formation of 25S and 5.8S rRNAs. The protein is ATP-dependent RNA helicase dbp10 (dbp10) of Neosartorya fischeri (strain ATCC 1020 / DSM 3700 / CBS 544.65 / FGSC A1164 / JCM 1740 / NRRL 181 / WB 181) (Aspergillus fischerianus).